The sequence spans 77 residues: Sec-independent protein translocase protein TatA 2 (77 aa).

Residues 2-22 traverse the membrane as a helical segment; it reads FPGGISMTELIIILAVILLLF. Positions 52–77 are disordered; it reads KEVKAEDVKTEERKEEKKEEKEKVEA.

Belongs to the TatA/E family. As to quaternary structure, forms a complex with TatC.

It localises to the cell inner membrane. In terms of biological role, part of the twin-arginine translocation (Tat) system that transports large folded proteins containing a characteristic twin-arginine motif in their signal peptide across membranes. TatA could form the protein-conducting channel of the Tat system. This is Sec-independent protein translocase protein TatA 2 from Aquifex aeolicus (strain VF5).